The primary structure comprises 549 residues: FERM domain-containing protein 1 (549 aa).

The segment at 1–40 (MAVPPRGRGIDPARTNPDTFPPSGARCMEPSPERPACSQQ) is disordered. In terms of domain architecture, FERM spans 54-369 (RDVLVLLPSR…DELELDLASR (316 aa)). 2 disordered regions span residues 377-400 (SSQH…YTSG) and 422-464 (HGLH…GQSA). The segment covering 430–443 (SSSPRTSRSHPSTR) has biased composition (low complexity). Positions 444 to 462 (GDSQATRQEPCTQVRTRGQ) are enriched in polar residues.

This Homo sapiens (Human) protein is FERM domain-containing protein 1 (FRMD1).